The primary structure comprises 347 residues: Phosphate acyltransferase (347 aa).

Belongs to the PlsX family. In terms of assembly, homodimer. Probably interacts with PlsY.

It localises to the cytoplasm. The enzyme catalyses a fatty acyl-[ACP] + phosphate = an acyl phosphate + holo-[ACP]. It functions in the pathway lipid metabolism; phospholipid metabolism. Functionally, catalyzes the reversible formation of acyl-phosphate (acyl-PO(4)) from acyl-[acyl-carrier-protein] (acyl-ACP). This enzyme utilizes acyl-ACP as fatty acyl donor, but not acyl-CoA. The polypeptide is Phosphate acyltransferase (Syntrophotalea carbinolica (strain DSM 2380 / NBRC 103641 / GraBd1) (Pelobacter carbinolicus)).